The chain runs to 221 residues: Inositol phosphorylceramide synthase regulatory subunit KEI1 (221 aa).

4 consecutive transmembrane segments (helical) span residues 11 to 31, 54 to 74, 79 to 99, and 154 to 174; these read SFLGFMPLYLAVEIVLGISIL, WIAYLWSVFTLIVFSQGLYLI, LLVFSQICVLYTIDTISTCFF, and ILITLVSLIFRFYFNFILASF. Residues 176–221 are COPI vesicle-binding; sequence QELLHHPKYLVDRDDVEQNLKNKPIWKRLWAKSQKGCYKLCKNLLE.

The protein belongs to the KEI1 family. Component of the inositol phosphorylceramide synthase complex composed of at least AUR1 and KEI1. Interacts (via C-terminal region) with COP1 and SEC21. Note=The interaction with AUR1 seems to occur with the full-length protein before cleavage by KEX2 since both full-length and short chains of KEI1 interact with AUR1. The precursor protein is cleaved into two polypeptide chains, KEI1N and KEI1C. The cleavage is performed in the Golgi apparatus by the KEX2 protease which recognizes residue Arg-135. Generation of KEX2 cleavage site may have been an accidental event in evolution without specific advantages or disadvantages in IPC synthesis.

It localises to the golgi apparatus membrane. In terms of biological role, regulatory component of the inositol phosphorylceramide (ICP) synthase which catalyzes the addition of a phosphorylinositol group onto ceramide to form inositol phosphorylceramide, an essential step in sphingolipid biosynthesis. Helps the medial Golgi localization of IPC synthase in a COPI vesicle-dependent manner. The sequence is that of Inositol phosphorylceramide synthase regulatory subunit KEI1 (KEI1) from Saccharomyces cerevisiae (strain ATCC 204508 / S288c) (Baker's yeast).